We begin with the raw amino-acid sequence, 123 residues long: rRNA-processing protein cgr-1 (123 aa).

A compositionally biased stretch (low complexity) spans 1 to 13; sequence MSSTTTTTQTTSQ. 2 disordered regions span residues 1–47 and 85–123; these read MSST…GLTS and EKRA…LINS. Positions 49–110 form a coiled coil; it reads EKRAKERQLL…EKMHKKRVER (62 aa). The segment covering 85 to 102 has biased composition (basic and acidic residues); sequence EKRAKKEEKERYEKMAEK. A compositionally biased stretch (basic residues) spans 103-123; it reads MHKKRVERLKRKEKRNKLINS.

The protein belongs to the CGR1 family.

Its subcellular location is the nucleus. It is found in the nucleolus. Involved in nucleolar integrity and required for processing of the pre-rRNA for the 60S ribosome subunit. This Neurospora crassa (strain ATCC 24698 / 74-OR23-1A / CBS 708.71 / DSM 1257 / FGSC 987) protein is rRNA-processing protein cgr-1 (cgr-1).